The following is a 528-amino-acid chain: Peptide chain release factor 3 (528 aa).

The tr-type G domain maps to 11–279; sequence SRRRTFAIIS…GLVDWAPSPQ (269 aa). GTP-binding positions include 20–27, 88–92, and 142–145; these read SHPDAGKT, DTPGH, and NKLD.

This sequence belongs to the TRAFAC class translation factor GTPase superfamily. Classic translation factor GTPase family. PrfC subfamily.

The protein resides in the cytoplasm. Functionally, increases the formation of ribosomal termination complexes and stimulates activities of RF-1 and RF-2. It binds guanine nucleotides and has strong preference for UGA stop codons. It may interact directly with the ribosome. The stimulation of RF-1 and RF-2 is significantly reduced by GTP and GDP, but not by GMP. This chain is Peptide chain release factor 3, found in Pseudoalteromonas atlantica (strain T6c / ATCC BAA-1087).